Reading from the N-terminus, the 327-residue chain is Transaldolase (327 aa).

Lys-132 functions as the Schiff-base intermediate with substrate in the catalytic mechanism.

The protein belongs to the transaldolase family. Type 1 subfamily. Homodimer.

The protein localises to the cytoplasm. The catalysed reaction is D-sedoheptulose 7-phosphate + D-glyceraldehyde 3-phosphate = D-erythrose 4-phosphate + beta-D-fructose 6-phosphate. The protein operates within carbohydrate degradation; pentose phosphate pathway; D-glyceraldehyde 3-phosphate and beta-D-fructose 6-phosphate from D-ribose 5-phosphate and D-xylulose 5-phosphate (non-oxidative stage): step 2/3. Functionally, transaldolase is important for the balance of metabolites in the pentose-phosphate pathway. This Chlamydia caviae (strain ATCC VR-813 / DSM 19441 / 03DC25 / GPIC) (Chlamydophila caviae) protein is Transaldolase.